A 358-amino-acid polypeptide reads, in one-letter code: Peptide chain release factor 1 (358 aa).

Glutamine 237 is subject to N5-methylglutamine.

Belongs to the prokaryotic/mitochondrial release factor family. Post-translationally, methylated by PrmC. Methylation increases the termination efficiency of RF1.

The protein localises to the cytoplasm. Peptide chain release factor 1 directs the termination of translation in response to the peptide chain termination codons UAG and UAA. This chain is Peptide chain release factor 1, found in Mycoplasma mobile (strain ATCC 43663 / 163K / NCTC 11711) (Mesomycoplasma mobile).